The following is a 223-amino-acid chain: MILDKLSIFGTDNIGIYIFTNDKYTIIPKIDDKEVIEKIQGILKTEIIQTTISKSVLVGILVTGNNDVILLPRTALADEIKVIKEQAKDVRVEVVDIRPTALGNIILSNTHGALIYQDLSEAEINKVKKALQIDTAIKGTIANIITVGSVAVITDKAGLVHIDATEEELKKLSELFKVKLDSGTVNFGSVFIRSGLVANRNGVLVGSSTTGAEILRIQRAFSD.

It belongs to the eIF-6 family.

Binds to the 50S ribosomal subunit and prevents its association with the 30S ribosomal subunit to form the 70S initiation complex. The protein is Translation initiation factor 6 of Sulfolobus acidocaldarius (strain ATCC 33909 / DSM 639 / JCM 8929 / NBRC 15157 / NCIMB 11770).